Reading from the N-terminus, the 539-residue chain is Membrane protein insertase YidC (539 aa).

The helical transmembrane segment at 6 to 26 threads the bilayer; sequence NILLIALALVSFLLFQQWNVA. Residues 35-44 are compositionally biased toward polar residues; it reads EQAQSGSTLP. Positions 35 to 55 are disordered; it reads EQAQSGSTLPAPSYADDLDPA. The next 4 helical transmembrane spans lie at 341–361, 416–436, 454–474, and 495–515; these read SFIQ…TFIV, LGGC…YWAL, LSAQ…MFLI, and PVMF…YWLV.

The protein belongs to the OXA1/ALB3/YidC family. Type 1 subfamily. As to quaternary structure, interacts with the Sec translocase complex via SecD. Specifically interacts with transmembrane segments of nascent integral membrane proteins during membrane integration.

It is found in the cell inner membrane. Functionally, required for the insertion and/or proper folding and/or complex formation of integral membrane proteins into the membrane. Involved in integration of membrane proteins that insert both dependently and independently of the Sec translocase complex, as well as at least some lipoproteins. Aids folding of multispanning membrane proteins. In Vibrio atlanticus (strain LGP32) (Vibrio splendidus (strain Mel32)), this protein is Membrane protein insertase YidC.